An 829-amino-acid chain; its full sequence is Periplasmic nitrate reductase (829 aa).

Positions 1-29 form a signal peptide, tat-type signal; the sequence is MKMTRRAFVKANAAASAAAVAGVTLPASA. Positions 41 to 97 constitute a 4Fe-4S Mo/W bis-MGD-type domain; that stretch reads IKWDKAPCRFCGTGCSVLVGTQNGRVVATQGDPEAPVNKGLNCIKGYFLSKIMYGKD. [4Fe-4S] cluster-binding residues include C48, C51, C55, and C83. Mo-bis(molybdopterin guanine dinucleotide) contacts are provided by residues K85, Q152, N177, C181, 214–221, 245–249, 264–266, M374, Q378, N484, 510–511, K533, D560, and 718–727; these read WGSNMAEM, STYYH, QSD, SD, and TGRVLEHWHT. F794 is a binding site for substrate. 2 residues coordinate Mo-bis(molybdopterin guanine dinucleotide): N802 and K819.

It belongs to the prokaryotic molybdopterin-containing oxidoreductase family. NasA/NapA/NarB subfamily. In terms of assembly, component of the periplasmic nitrate reductase NapAB complex composed of NapA and NapB. It depends on [4Fe-4S] cluster as a cofactor. The cofactor is Mo-bis(molybdopterin guanine dinucleotide). Post-translationally, predicted to be exported by the Tat system. The position of the signal peptide cleavage has not been experimentally proven.

It is found in the periplasm. The catalysed reaction is 2 Fe(II)-[cytochrome] + nitrate + 2 H(+) = 2 Fe(III)-[cytochrome] + nitrite + H2O. Functionally, catalytic subunit of the periplasmic nitrate reductase complex NapAB. Receives electrons from NapB and catalyzes the reduction of nitrate to nitrite. The sequence is that of Periplasmic nitrate reductase from Aliivibrio fischeri (strain ATCC 700601 / ES114) (Vibrio fischeri).